A 240-amino-acid chain; its full sequence is Glutathione S-transferase omega-1 (240 aa).

Serine 2 is subject to N-acetylserine. The 80-residue stretch at 22-101 (GQIRVYSMRF…YLDEAYPEKK (80 aa)) folds into the GST N-terminal domain. The active-site Nucleophile is cysteine 32. N6-acetyllysine is present on lysine 57. Glutathione contacts are provided by residues lysine 59, valine 72, and 85–86 (ES). A GST C-terminal domain is found at 106–227 (DPYKKARQKM…AKTYREYLNL (122 aa)). The residue at position 129 (serine 129) is a Phosphoserine. Lysine 152 carries the N6-acetyllysine modification.

Belongs to the GST superfamily. Omega family. As to quaternary structure, homodimer.

The protein localises to the cytoplasm. It localises to the cytosol. The catalysed reaction is RX + glutathione = an S-substituted glutathione + a halide anion + H(+). It catalyses the reaction L-dehydroascorbate + 2 glutathione = glutathione disulfide + L-ascorbate. It carries out the reaction methylarsonate + 2 glutathione + H(+) = methylarsonous acid + glutathione disulfide + H2O. Exhibits glutathione-dependent thiol transferase and dehydroascorbate reductase activities. Has S-(phenacyl)glutathione reductase activity. Also has glutathione S-transferase activity. Participates in the biotransformation of inorganic arsenic and reduces monomethylarsonic acid (MMA) and dimethylarsonic acid. In Mus musculus (Mouse), this protein is Glutathione S-transferase omega-1 (Gsto1).